A 194-amino-acid polypeptide reads, in one-letter code: 23 kDa U4/U6.U5 small nuclear ribonucleoprotein component (194 aa).

A C2H2-type zinc finger spans residues 80–104 (FYCDICNLTFKDTLQYIDHLNHKVH).

Component of the U4/U6-U5 tri-snRNP complex composed of the U4, U6 and U5 snRNAs and at least PRP3, PRP4, PRP6, PRP8, PRP18, PRP31, PRP38, SNU13, SNU23, SNU66, SNU114, SPP381, SMB1, SMD1, SMD2, SMD3, SMX2, SMX3, LSM2, LSM3, LSM4, LSM5, LSM6, LSM7, LSM8, BRR2 and DIB1.

Its subcellular location is the nucleus. Functionally, participates in pre-mRNA splicing. Part of the U4/U5/U6 tri-snRNP complex, one of the building blocks of the spliceosome. The polypeptide is 23 kDa U4/U6.U5 small nuclear ribonucleoprotein component (SNU23) (Saccharomyces cerevisiae (strain ATCC 204508 / S288c) (Baker's yeast)).